The primary structure comprises 545 residues: Sulfite oxidase, mitochondrial (545 aa).

The N-terminal 79 residues, 1-79, are a transit peptide targeting the mitochondrion; the sequence is MLLLHRAVVL…YQDHRCRAAQ (79 aa). Residues 82 to 161 form the Cytochrome b5 heme-binding domain; the sequence is THIYTKEEVS…LAQYKIGELN (80 aa). Histidine 118 contacts heme b. The residue at position 123 (serine 123) is a Phosphoserine. The heme b site is built by histidine 143, glutamine 145, and histidine 147. The tract at residues 165 to 174 is hinge; that stretch reads KVAPTVETSD. The tract at residues 175-401 is moco domain; sequence PYADDPVRHP…YSHWQRRDYK (227 aa). Residues 215-219, cysteine 264, aspartate 322, histidine 361, arginine 366, and 377-379 each bind Mo-molybdopterin; these read FTRNH and HVK. The homodimerization stretch occupies residues 402 to 538; it reads GFSPSVDWET…RGVLSNAWHR (137 aa).

Homodimer. The cofactor is heme b. Mo-molybdopterin serves as cofactor.

Its subcellular location is the mitochondrion intermembrane space. The enzyme catalyses sulfite + O2 + H2O = sulfate + H2O2. It participates in energy metabolism; sulfur metabolism. Functionally, catalyzes the oxidation of sulfite to sulfate, the terminal reaction in the oxidative degradation of sulfur-containing amino acids. The chain is Sulfite oxidase, mitochondrial (SUOX) from Homo sapiens (Human).